Here is a 329-residue protein sequence, read N- to C-terminus: DNA polymerase III subunit delta' (329 aa).

As to quaternary structure, component of the DNA clamp loading complex consisting of tau(3):delta(1):delta'(1). The DNA polymerase III holoenzyme complex contains at least 10 different subunits organized into 3 functionally essential subassemblies: the Pol III core, the beta sliding clamp processivity factor and the clamp-loading complex. The Pol III core (subunits alpha, epsilon and theta) contains the polymerase and the 3'-5' exonuclease proofreading activities. The polymerase is tethered to the template via the dimeric beta sliding clamp processivity factor. The DNA clamp-loading complex assembles the beta sliding clamp onto the primed template and plays a central role in the organization and communication at the replication fork.

It is found in the cytoplasm. The protein localises to the nucleoid. The enzyme catalyses DNA(n) + a 2'-deoxyribonucleoside 5'-triphosphate = DNA(n+1) + diphosphate. In terms of biological role, DNA polymerase III is a complex, multichain enzyme responsible for most of the replicative synthesis in bacteria. This chain is DNA polymerase III subunit delta' (holB), found in Bacillus subtilis (strain 168).